The chain runs to 216 residues: Heart- and neural crest derivatives-expressed protein 2 (216 aa).

Positions 74–115 (MDHSHYGGVPPGSGPPGLGGPRPVKRRGTANRKERRRTQSIN) are disordered. The span at 82–93 (VPPGSGPPGLGG) shows a compositional bias: gly residues. Positions 96–111 (PVKRRGTANRKERRRT) are enriched in basic residues. The bHLH domain occupies 98–150 (KRRGTANRKERRRTQSINSAFAELRECIPNVPADTKLSKIKTLRLATSYIAYL).

As to quaternary structure, efficient DNA binding requires dimerization with another bHLH protein.

It localises to the nucleus. In terms of biological role, essential for cardiac morphogenesis. Binds DNA on E-box consensus sequence 5'-CANNTG-3'. Plays an important role in limb development, particularly in the establishment of anterior-posterior polarization of the limb bud. The sequence is that of Heart- and neural crest derivatives-expressed protein 2 (HAND2) from Gallus gallus (Chicken).